We begin with the raw amino-acid sequence, 141 residues long: Large ribosomal subunit protein uL11 (141 aa).

This sequence belongs to the universal ribosomal protein uL11 family. In terms of assembly, part of the ribosomal stalk of the 50S ribosomal subunit. Interacts with L10 and the large rRNA to form the base of the stalk. L10 forms an elongated spine to which L12 dimers bind in a sequential fashion forming a multimeric L10(L12)X complex. One or more lysine residues are methylated.

Its function is as follows. Forms part of the ribosomal stalk which helps the ribosome interact with GTP-bound translation factors. The sequence is that of Large ribosomal subunit protein uL11 from Chloroherpeton thalassium (strain ATCC 35110 / GB-78).